The sequence spans 432 residues: Keratin, type I cytoskeletal 17 (432 aa).

The tract at residues 1–24 (MTTSIRQFTSSSSIKGSSGLGGGS) is disordered. The head stretch occupies residues 1 to 83 (MTTSIRQFTS…GGVDGLLAGG (83 aa)). 2 positions are modified to phosphoserine: serine 12 and serine 13. Lysine 15 is covalently cross-linked (Glycyl lysine isopeptide (Lys-Gly) (interchain with G-Cter in SUMO1); alternate). Residue lysine 15 forms a Glycyl lysine isopeptide (Lys-Gly) (interchain with G-Cter in SUMO2); alternate linkage. 3 positions are modified to phosphoserine: serine 25, serine 32, and serine 39. Serine 44 carries the phosphoserine; by RPS6KA1 modification. A coil 1A region spans residues 84 to 120 (EKATMQNLNDRLASYLDKVRALEEANTELEVKIRDWY). One can recognise an IF rod domain in the interval 84–395 (EKATMQNLND…RLLEGEDAHL (312 aa)). Positions 102-116 (VRALEEANTELEVKI) are peptide epitope S1; induces T-cell and keratinocyte proliferation and IFN-gamma production. Threonine 110 is subject to Phosphothreonine. Residues 121-138 (QRQAPGPARDYSQYYRTI) are linker 1. The segment at 139 to 230 (EELQNKILTA…NHEEEMNALR (92 aa)) is coil 1B. Residues 153-167 (ANILLQIDNARLAAD) form a peptide epitope S2; induces T-cell proliferation and IFN-gamma production region. The tract at residues 231 to 250 (GQVGGEINVEMDAAPGVDLS) is linker 12. Positions 251-392 (RILNEMRDQY…TYRRLLEGED (142 aa)) are coil 2. Lysine 278 is covalently cross-linked (Glycyl lysine isopeptide (Lys-Gly) (interchain with G-Cter in SUMO2)). A Phosphothreonine modification is found at threonine 279. Serine 323 bears the Phosphoserine mark. The peptide epitope S4; induces T-cell and keratinocyte proliferation and IFN-gamma production stretch occupies residues 332 to 346 (ENRYCVQLSQIQGLI). The tract at residues 393–432 (AHLTQYKKEPVTTRQVRTIVEEVQDGKVISSREQVHQTTR) is tail. Glycyl lysine isopeptide (Lys-Gly) (interchain with G-Cter in SUMO1); alternate cross-links involve residues lysine 399, lysine 400, and lysine 419. Residues lysine 399, lysine 400, and lysine 419 each participate in a glycyl lysine isopeptide (Lys-Gly) (interchain with G-Cter in SUMO2); alternate cross-link.

It belongs to the intermediate filament family. Heterodimer of a type I and a type II keratin. KRT17 associates with KRT6 isomers (KRT6A or KRT6B). Interacts with TRADD and SFN. In terms of processing, phosphorylation at Ser-44 occurs in a growth- and stress-dependent fashion in skin keratinocytes, it has no effect on filament organization. As to expression, expressed in the outer root sheath and medulla region of hair follicle specifically from eyebrow and beard, digital pulp, nail matrix and nail bed epithelium, mucosal stratified squamous epithelia and in basal cells of oral epithelium, palmoplantar epidermis and sweat and mammary glands. Also expressed in myoepithelium of prostate, basal layer of urinary bladder, cambial cells of sebaceous gland and in exocervix (at protein level).

Its subcellular location is the cytoplasm. In terms of biological role, type I keratin involved in the formation and maintenance of various skin appendages, specifically in determining shape and orientation of hair. Required for the correct growth of hair follicles, in particular for the persistence of the anagen (growth) state. Modulates the function of TNF-alpha in the specific context of hair cycling. Regulates protein synthesis and epithelial cell growth through binding to the adapter protein SFN and by stimulating Akt/mTOR pathway. Involved in tissue repair. May be a marker of basal cell differentiation in complex epithelia and therefore indicative of a certain type of epithelial 'stem cells'. Acts as a promoter of epithelial proliferation by acting a regulator of immune response in skin: promotes Th1/Th17-dominated immune environment contributing to the development of basaloid skin tumors. May act as an autoantigen in the immunopathogenesis of psoriasis, with certain peptide regions being a major target for autoreactive T-cells and hence causing their proliferation. This chain is Keratin, type I cytoskeletal 17 (KRT17), found in Homo sapiens (Human).